Here is a 377-residue protein sequence, read N- to C-terminus: Nitric oxide reductase FlRd-NAD(+) reductase (377 aa).

This sequence belongs to the FAD-dependent oxidoreductase family. FAD is required as a cofactor.

It localises to the cytoplasm. The catalysed reaction is 2 reduced [nitric oxide reductase rubredoxin domain] + NAD(+) + H(+) = 2 oxidized [nitric oxide reductase rubredoxin domain] + NADH. It participates in nitrogen metabolism; nitric oxide reduction. One of at least two accessory proteins for anaerobic nitric oxide (NO) reductase. Reduces the rubredoxin moiety of NO reductase. This Shigella boydii serotype 18 (strain CDC 3083-94 / BS512) protein is Nitric oxide reductase FlRd-NAD(+) reductase.